We begin with the raw amino-acid sequence, 695 residues long: Sodium-dependent phosphate transport protein 2B (695 aa).

The segment at 1–44 is disordered; that stretch reads MAPWPELENAHPNPNKFIEGASGPQSSIPDKDKGTSKTNDSGTP. Over 1 to 90 the chain is Cytoplasmic; the sequence is MAPWPELENA…KWSERDSKGK (90 aa). Residues 91 to 111 traverse the membrane as a helical segment; that stretch reads ILCIFQGIGKFILLLGFLYLF. The Extracellular segment spans residues 112–136; the sequence is VCSLDVLSSAFQLVGGKMAGQFFSN. Residues 137 to 157 traverse the membrane as a helical segment; that stretch reads NSIMSNPVAGLVIGVLVTVMV. At 158–213 the chain is on the cytoplasmic side; it reads QSSSTSSSIIVSMVASSLLSVRAAIPIIMGANIGTSITNTIVALMQAGDRNEFRRA. A helical transmembrane segment spans residues 214–234; sequence FAGATVHDFFNWLSVLVLLPL. Residues 235 to 363 are Extracellular-facing; it reads EAATHYLEKL…FVNFSLPDLA (129 aa). 5 N-linked (GlcNAc...) asparagine glycosylation sites follow: asparagine 295, asparagine 313, asparagine 321, asparagine 340, and asparagine 356. An intrachain disulfide couples cysteine 303 to cysteine 350. A helical membrane pass occupies residues 364–384; the sequence is VGIILLTVSLLILCGCLIMIV. Topologically, residues 385 to 408 are cytoplasmic; it reads KLLGSVLRGQVATVIKKTLNTDFP. The helical transmembrane segment at 409-429 threads the bilayer; that stretch reads FPFAWLTGYLAILVGAGMTFI. Topologically, residues 430–486 are extracellular; the sequence is VQSSSVFTSAMTPLIGIGVISIERAYPLTLGSNIGTTTTAILAALASPGNTLRSSLQ. A helical transmembrane segment spans residues 487–507; the sequence is IALCHFFFNISGILLWYPIPF. At 508-526 the chain is on the cytoplasmic side; that stretch reads TRLPIRLAKGLGNISAKYR. Residues 527–547 traverse the membrane as a helical segment; it reads WFAVFYLIFFFLLTPLTVFGL. The Extracellular portion of the chain corresponds to 548–551; that stretch reads SLAG. Residues 552-572 traverse the membrane as a helical segment; it reads WPVLVGVGVPIILLILLVLCL. The Cytoplasmic portion of the chain corresponds to 573–695; sequence RMLQARCPRI…MKALSNTTVF (123 aa).

It belongs to the SLC34A transporter family. In terms of tissue distribution, highly expressed in the lung, in type II alveolar cells. Moderately expressed in kidney followed by small intestine.

The protein resides in the apical cell membrane. The enzyme catalyses 3 Na(+)(out) + phosphate(out) = 3 Na(+)(in) + phosphate(in). Functionally, involved in actively transporting phosphate into cells via Na(+) cotransport. This chain is Sodium-dependent phosphate transport protein 2B (Slc34a2), found in Rattus norvegicus (Rat).